Consider the following 348-residue polypeptide: Malyl-CoA/beta-methylmalyl-CoA/citramalyl-CoA lyase (348 aa).

Residues 32–33, lysine 40, and arginine 92 each bind substrate; that span reads HF. Mg(2+)-binding residues include glutamate 157 and aspartate 184. Residues 183-184 and leucine 274 contribute to the substrate site; that span reads AD.

This sequence belongs to the HpcH/HpaI aldolase family. As to quaternary structure, homohexamer. Dimer of trimers. The cofactor is Mg(2+). Requires Mn(2+) as cofactor.

It catalyses the reaction (S)-malyl-CoA = glyoxylate + acetyl-CoA. The catalysed reaction is (2R,3S)-beta-methylmalyl-CoA = propanoyl-CoA + glyoxylate. The enzyme catalyses (3S)-citramalyl-CoA = pyruvate + acetyl-CoA. With respect to regulation, inhibited by oxalate. Its function is as follows. Involved in the 3-hydroxypropionate cycle used for autotrophic carbon dioxide fixation, and in the glyoxylate assimilation cycle used to regenerate acetyl-CoA and produce pyruvate as universal precursor for biosynthesis. As a part of the 3-hydroxypropionate cycle, it catalyzes the cleavage of (S)-malyl-CoA to yield acetyl-CoA and glyoxylate. As part of the glyoxylate assimilation cycle, it catalyzes the condensation of glyoxylate with propionyl-CoA to yield (2R,3S)-beta-methylmalyl-CoA, and catalyzes the cleavage of (S)-citramalyl-CoA to yield acetyl-CoA and pyruvate. The chain is Malyl-CoA/beta-methylmalyl-CoA/citramalyl-CoA lyase (mcl) from Chloroflexus aurantiacus.